The following is a 175-amino-acid chain: UPF0398 protein SSA_1858 (175 aa).

Belongs to the UPF0398 family.

The polypeptide is UPF0398 protein SSA_1858 (Streptococcus sanguinis (strain SK36)).